Reading from the N-terminus, the 519-residue chain is Probable DNA ligase (519 aa).

Glutamate 221 contributes to the ATP binding site. Lysine 223 (N6-AMP-lysine intermediate) is an active-site residue. The ATP site is built by arginine 228, arginine 243, glutamate 272, phenylalanine 312, arginine 384, and lysine 390.

Belongs to the ATP-dependent DNA ligase family. Mg(2+) is required as a cofactor.

It catalyses the reaction ATP + (deoxyribonucleotide)n-3'-hydroxyl + 5'-phospho-(deoxyribonucleotide)m = (deoxyribonucleotide)n+m + AMP + diphosphate.. Functionally, DNA ligase that seals nicks in double-stranded DNA during DNA replication, DNA recombination and DNA repair. The polypeptide is Probable DNA ligase (Mycolicibacterium paratuberculosis (strain ATCC BAA-968 / K-10) (Mycobacterium paratuberculosis)).